The primary structure comprises 498 residues: Alpha-amylase A (498 aa).

Residues 1 to 21 (MMVAWWSLFLYGLQVAAPALA) form the signal peptide. The cysteines at positions 51 and 59 are disulfide-linked. Residues Gln-56 and Trp-104 each contribute to the substrate site. Asn-142 contributes to the Ca(2+) binding site. Residue His-143 participates in substrate binding. Cys-171 and Cys-185 are disulfide-bonded. Ca(2+)-binding residues include Glu-183 and Asp-196. Asn-218 carries N-linked (GlcNAc...) asparagine glycosylation. Arg-225 provides a ligand contact to substrate. Asp-227, His-231, and Glu-251 together coordinate Ca(2+). The active-site Nucleophile is Asp-227. Position 230–231 (230–231 (KH)) interacts with substrate. Glu-251 (proton donor) is an active-site residue. Residue Gly-255 coordinates substrate. Cys-261 and Cys-304 are disulfide-bonded. 2 residues coordinate substrate: Asp-318 and Arg-365. Residues Cys-461 and Cys-496 are joined by a disulfide bond.

The protein belongs to the glycosyl hydrolase 13 family. Requires Ca(2+) as cofactor.

The catalysed reaction is Endohydrolysis of (1-&gt;4)-alpha-D-glucosidic linkages in polysaccharides containing three or more (1-&gt;4)-alpha-linked D-glucose units.. In Aspergillus awamori (Black koji mold), this protein is Alpha-amylase A (amyA).